The sequence spans 286 residues: NADPH-dependent 7-cyano-7-deazaguanine reductase (286 aa).

Position 92-94 (92-94) interacts with substrate; that stretch reads IES. 94–95 contributes to the NADPH binding site; the sequence is SK. The active-site Thioimide intermediate is the cysteine 194. Aspartate 201 functions as the Proton donor in the catalytic mechanism. Substrate is bound at residue 233 to 234; it reads HE. 262-263 is a binding site for NADPH; sequence RG.

This sequence belongs to the GTP cyclohydrolase I family. QueF type 2 subfamily. As to quaternary structure, homodimer.

The protein resides in the cytoplasm. It carries out the reaction 7-aminomethyl-7-carbaguanine + 2 NADP(+) = 7-cyano-7-deazaguanine + 2 NADPH + 3 H(+). It participates in tRNA modification; tRNA-queuosine biosynthesis. Catalyzes the NADPH-dependent reduction of 7-cyano-7-deazaguanine (preQ0) to 7-aminomethyl-7-deazaguanine (preQ1). This Shewanella sp. (strain MR-7) protein is NADPH-dependent 7-cyano-7-deazaguanine reductase.